A 432-amino-acid chain; its full sequence is D-amino acid dehydrogenase (432 aa).

3–17 (VVILGSGVVGVTSAW) is an FAD binding site.

Belongs to the DadA oxidoreductase family. The cofactor is FAD.

It carries out the reaction a D-alpha-amino acid + A + H2O = a 2-oxocarboxylate + AH2 + NH4(+). The protein operates within amino-acid degradation; D-alanine degradation; NH(3) and pyruvate from D-alanine: step 1/1. In terms of biological role, oxidative deamination of D-amino acids. The protein is D-amino acid dehydrogenase of Salmonella agona (strain SL483).